The primary structure comprises 95 residues: Small ribosomal subunit protein bS18 (95 aa).

This sequence belongs to the bacterial ribosomal protein bS18 family. In terms of assembly, part of the 30S ribosomal subunit. Forms a tight heterodimer with protein bS6.

Binds as a heterodimer with protein bS6 to the central domain of the 16S rRNA, where it helps stabilize the platform of the 30S subunit. The polypeptide is Small ribosomal subunit protein bS18 (Rickettsia felis (strain ATCC VR-1525 / URRWXCal2) (Rickettsia azadi)).